Reading from the N-terminus, the 364-residue chain is Biotin synthase (364 aa).

The region spanning 68–303 is the Radical SAM core domain; it reads CCGNTVDLCS…QQILRYAGGR (236 aa). [4Fe-4S] cluster is bound by residues C86, C90, and C93. Positions 131, 168, 228, and 298 each coordinate [2Fe-2S] cluster.

This sequence belongs to the radical SAM superfamily. Biotin synthase family. In terms of assembly, homodimer. [4Fe-4S] cluster serves as cofactor. The cofactor is [2Fe-2S] cluster.

It carries out the reaction (4R,5S)-dethiobiotin + (sulfur carrier)-SH + 2 reduced [2Fe-2S]-[ferredoxin] + 2 S-adenosyl-L-methionine = (sulfur carrier)-H + biotin + 2 5'-deoxyadenosine + 2 L-methionine + 2 oxidized [2Fe-2S]-[ferredoxin]. It participates in cofactor biosynthesis; biotin biosynthesis; biotin from 7,8-diaminononanoate: step 2/2. Functionally, catalyzes the conversion of dethiobiotin (DTB) to biotin by the insertion of a sulfur atom into dethiobiotin via a radical-based mechanism. This chain is Biotin synthase, found in Microcystis aeruginosa (strain NIES-843 / IAM M-2473).